A 428-amino-acid polypeptide reads, in one-letter code: Histidine--tRNA ligase (428 aa).

The protein belongs to the class-II aminoacyl-tRNA synthetase family. Homodimer.

It localises to the cytoplasm. It carries out the reaction tRNA(His) + L-histidine + ATP = L-histidyl-tRNA(His) + AMP + diphosphate + H(+). The protein is Histidine--tRNA ligase of Lactobacillus delbrueckii subsp. bulgaricus (strain ATCC BAA-365 / Lb-18).